The chain runs to 92 residues: Envelope glycoprotein J (92 aa).

The signal sequence occupies residues 1-21; the sequence is MSLRAVWHLGLLGSLVGAVLA. At 22-49 the chain is on the extracellular side; that stretch reads ATHRGPAANTTDPLTHAPVSPHPSPLGG. Residue N30 is glycosylated (N-linked (GlcNAc...) asparagine; by host). Residues 50–70 traverse the membrane as a helical segment; the sequence is FAVPLVVGGLCAVVLGAACLL. The Cytoplasmic segment spans residues 71-92; the sequence is ELLRRTCRGWGRYHPYMDPVVV.

The protein belongs to the alphaherpesvirinae glycoprotein J family.

It localises to the host Golgi apparatus membrane. The protein localises to the host endoplasmic reticulum membrane. It is found in the host endosome membrane. Functionally, inhibits host cell apoptosis. Induces an increase in reactive oxygen species (ROS) in the host cell. This chain is Envelope glycoprotein J (gJ), found in Homo sapiens (Human).